A 958-amino-acid chain; its full sequence is Glucose transport transcription regulator RGT1 (958 aa).

The disordered stretch occupies residues 1-73 (MTDIAESTAH…GSIGGKKATR (73 aa)). Over residues 21–64 (TTASVASAALATATASASPTTGSATSTAAPGKRSRSSSTGSAKG) the composition is skewed to low complexity. Positions 75-104 (CDQCRKRKIKCDYDNDKNVCSSCNRNGDRC) form a DNA-binding region, zn(2)-C6 fungal-type. Disordered stretches follow at residues 113-165 (RGPS…NNSV), 197-218 (SPHH…SNNS), 291-322 (TAVS…SRAS), 720-740 (DKPP…NPYS), and 884-908 (SPSL…FNET). A compositionally biased stretch (low complexity) spans 124 to 164 (STSSAAGASTTSSTHQTFNANASGNTNSSNNNNHNNNNNNS). Positions 730-740 (SSTNTSSNPYS) are enriched in low complexity. A compositionally biased stretch (polar residues) spans 884 to 898 (SPSLGSSAYSNNPHS).

It belongs to the EDS1/RGT1 family.

The protein resides in the nucleus. Its subcellular location is the cytoplasm. Glucose-responsive transcription factor that regulates expression of several glucose transporter (HXT) genes in response to glucose. In the absence of glucose, it functions as a transcriptional repressor, whereas high concentrations of glucose cause it to function as a transcriptional activator. In cells growing on low levels of glucose, has a neutral role, neither repressing nor activating transcription. This Vanderwaltozyma polyspora (strain ATCC 22028 / DSM 70294 / BCRC 21397 / CBS 2163 / NBRC 10782 / NRRL Y-8283 / UCD 57-17) (Kluyveromyces polysporus) protein is Glucose transport transcription regulator RGT1 (RGT1).